Consider the following 455-residue polypeptide: MVNLGSYVFVFVALSLTVVVPSVQAHIAEYDEYWTQRQTNALRETLESYDPNPENVTDHFNYHAALAMETTGIVNETRRDLRQVGRGKKTTRRGGRFESLNAIDKCWRGDKNWDKNRKKLADCVLGFGRKTTGGKNGPIYVVTDPSDNDLLKPKPGTIRHAVTRDRPLWIIFARSMIIKLQQELIITNDKTIDGRGAKIYITGGAGLTLQFVRNVIIHNIHIKQIKRGAGGLIIDSEQHFGLRTVSDGDGINIFGATNVWIDHVSMTDCSDGMIDAIMGSTAITISNSHFTDHDEVMLFGGTNKDVIDKKMQITVAFNHFGKRLKQRMPRVRFGLVHVVNNDYTHWEMYAIGGNMNPTIISQGNRFIAPPIEDSKQVTKREYTPYPEWKSWNWQSEKDYFLNGAYFVQSGKANAWSATPKNPIPRKFAIRPQPGTKVRRLTKDAGTLGCKPGKSC.

The first 25 residues, 1–25, serve as a signal peptide directing secretion; that stretch reads MVNLGSYVFVFVALSLTVVVPSVQA. Residues Asn55 and Asn75 are each glycosylated (N-linked (GlcNAc...) asparagine). Positions 247, 271, and 275 each coordinate Ca(2+). Arg327 is a catalytic residue.

This sequence belongs to the polysaccharide lyase 1 family. Ca(2+) serves as cofactor.

The enzyme catalyses Eliminative cleavage of (1-&gt;4)-alpha-D-galacturonan to give oligosaccharides with 4-deoxy-alpha-D-galact-4-enuronosyl groups at their non-reducing ends.. The protein operates within glycan metabolism; pectin degradation; 2-dehydro-3-deoxy-D-gluconate from pectin: step 2/5. The protein is Probable pectate lyase 6 of Arabidopsis thaliana (Mouse-ear cress).